The sequence spans 410 residues: Peptidase T (410 aa).

Residue His-78 coordinates Zn(2+). Residue Asp-80 is part of the active site. Asp-140 provides a ligand contact to Zn(2+). Glu-174 (proton acceptor) is an active-site residue. Positions 175, 197, and 379 each coordinate Zn(2+).

It belongs to the peptidase M20B family. Requires Zn(2+) as cofactor.

It is found in the cytoplasm. It carries out the reaction Release of the N-terminal residue from a tripeptide.. Its function is as follows. Cleaves the N-terminal amino acid of tripeptides. The chain is Peptidase T from Staphylococcus saprophyticus subsp. saprophyticus (strain ATCC 15305 / DSM 20229 / NCIMB 8711 / NCTC 7292 / S-41).